The primary structure comprises 99 residues: Citrate lyase acyl carrier protein (99 aa).

S14 is subject to O-(phosphoribosyl dephospho-coenzyme A)serine.

This sequence belongs to the CitD family. Oligomer with a subunit composition of (alpha,beta,gamma)6.

The protein localises to the cytoplasm. Its function is as follows. Covalent carrier of the coenzyme of citrate lyase. The protein is Citrate lyase acyl carrier protein of Edwardsiella ictaluri (strain 93-146).